The chain runs to 688 residues: DNA polymerase III subunit tau/gamma (688 aa).

45-52 serves as a coordination point for ATP; the sequence is GTRGVGKT. Cys64, Cys73, Cys76, and Cys79 together coordinate Zn(2+). A disordered region spans residues 452 to 506; that stretch reads QELDEEKSHKKMTALPVREMTEPKPKHIEKPTLPSNAAQAPQKNSTEENSSDDNV. Basic and acidic residues predominate over residues 470–481; it reads EMTEPKPKHIEK. Positions 484 to 499 are enriched in polar residues; that stretch reads LPSNAAQAPQKNSTEE.

The protein belongs to the DnaX/STICHEL family. In terms of assembly, DNA polymerase III contains a core (composed of alpha, epsilon and theta chains) that associates with a tau subunit. This core dimerizes to form the POLIII' complex. PolIII' associates with the gamma complex (composed of gamma, delta, delta', psi and chi chains) and with the beta chain to form the complete DNA polymerase III complex.

The catalysed reaction is DNA(n) + a 2'-deoxyribonucleoside 5'-triphosphate = DNA(n+1) + diphosphate. Functionally, DNA polymerase III is a complex, multichain enzyme responsible for most of the replicative synthesis in bacteria. This DNA polymerase also exhibits 3' to 5' exonuclease activity. In Haemophilus influenzae (strain ATCC 51907 / DSM 11121 / KW20 / Rd), this protein is DNA polymerase III subunit tau/gamma (dnaX).